Consider the following 127-residue polypeptide: uncharacterized protein (127 aa).

Over residues 1-17 (MQGSVQIQKGNISSSYT) the composition is skewed to polar residues. The interval 1-36 (MQGSVQIQKGNISSSYTPEKHPSHPTSANGSMSPKR) is disordered.

This is an uncharacterized protein from Treponema pallidum (strain Nichols).